A 420-amino-acid polypeptide reads, in one-letter code: Glutamate dehydrogenase (420 aa).

Lys-105 is a catalytic residue. 220-226 (GYGNAGY) serves as a coordination point for NAD(+).

Belongs to the Glu/Leu/Phe/Val dehydrogenases family. In terms of assembly, homohexamer.

It localises to the cytoplasm. It carries out the reaction L-glutamate + NAD(+) + H2O = 2-oxoglutarate + NH4(+) + NADH + H(+). The enzyme catalyses L-glutamate + NADP(+) + H2O = 2-oxoglutarate + NH4(+) + NADPH + H(+). This chain is Glutamate dehydrogenase (gdhA), found in Pyrococcus furiosus (strain ATCC 43587 / DSM 3638 / JCM 8422 / Vc1).